A 675-amino-acid chain; its full sequence is tRNA 5-methylaminomethyl-2-thiouridine biosynthesis bifunctional protein MnmC (675 aa).

Residues 1–245 (MANLPIQHAS…KREMLSGLLP (245 aa)) form a tRNA (mnm(5)s(2)U34)-methyltransferase region. The segment at 271–675 (IGGGIASVLT…LLKGKPVTHD (405 aa)) is FAD-dependent cmnm(5)s(2)U34 oxidoreductase.

In the N-terminal section; belongs to the methyltransferase superfamily. tRNA (mnm(5)s(2)U34)-methyltransferase family. It in the C-terminal section; belongs to the DAO family. It depends on FAD as a cofactor.

Its subcellular location is the cytoplasm. It carries out the reaction 5-aminomethyl-2-thiouridine(34) in tRNA + S-adenosyl-L-methionine = 5-methylaminomethyl-2-thiouridine(34) in tRNA + S-adenosyl-L-homocysteine + H(+). Catalyzes the last two steps in the biosynthesis of 5-methylaminomethyl-2-thiouridine (mnm(5)s(2)U) at the wobble position (U34) in tRNA. Catalyzes the FAD-dependent demodification of cmnm(5)s(2)U34 to nm(5)s(2)U34, followed by the transfer of a methyl group from S-adenosyl-L-methionine to nm(5)s(2)U34, to form mnm(5)s(2)U34. The sequence is that of tRNA 5-methylaminomethyl-2-thiouridine biosynthesis bifunctional protein MnmC from Pectobacterium atrosepticum (strain SCRI 1043 / ATCC BAA-672) (Erwinia carotovora subsp. atroseptica).